The primary structure comprises 315 residues: Dihydroorotate dehydrogenase (fumarate) (315 aa).

Substrate is bound by residues K46, 70-74, and N130; that span reads NSMGL. 46-47 is a binding site for FMN; sequence KS. An FMN-binding site is contributed by N130. The active-site Nucleophile is the C133. FMN is bound by residues K167 and I195. Residue 196–197 participates in substrate binding; sequence NS. FMN is bound by residues G224, 252-253, and 274-275; these read GG and GT.

This sequence belongs to the dihydroorotate dehydrogenase family. Type 1 subfamily. As to quaternary structure, homodimer. FMN serves as cofactor.

The protein resides in the cytoplasm. It carries out the reaction (S)-dihydroorotate + fumarate = orotate + succinate. It participates in pyrimidine metabolism; UMP biosynthesis via de novo pathway. Functionally, catalyzes the conversion of dihydroorotate to orotate with fumarate as the electron acceptor. The protein is Dihydroorotate dehydrogenase (fumarate) (URA1) of Kluyveromyces lactis (strain ATCC 8585 / CBS 2359 / DSM 70799 / NBRC 1267 / NRRL Y-1140 / WM37) (Yeast).